We begin with the raw amino-acid sequence, 198 residues long: MLYPTPIAKLIDSYSKLPGIGIKTATRLAFYTIGMSNEDVNDFAKNLLAAKRELTYCSICGNLTDDDPCHICTDTSRDQTTILVVEDAKDVSAMEKIQEYRGYYHVLHGLISPMNGMGPDDINLKSLITRLMDGKVSEVIVATNATADGEATSMYISRVLKPAGIKVTRLARGLAVGSDIEYADEVTLLRAIENRTEL.

Residues 57–72 form a C4-type zinc finger; that stretch reads CSICGNLTDDDPCHIC. Positions 80-175 constitute a Toprim domain; the sequence is TTILVVEDAK…KVTRLARGLA (96 aa).

It belongs to the RecR family.

In terms of biological role, may play a role in DNA repair. It seems to be involved in an RecBC-independent recombinational process of DNA repair. It may act with RecF and RecO. The chain is Recombination protein RecR from Streptococcus pyogenes serotype M5 (strain Manfredo).